A 451-amino-acid chain; its full sequence is uncharacterized protein (451 aa).

A TRAM domain is found at 1–59; sequence MLKKNDIVEVEISDLSHDGAGIAKVDGLVFFVDNALPTEKIRMRVLKVKKNIAFGKVES. S-adenosyl-L-methionine is bound by residues Gln-283, Tyr-312, Glu-333, and Asp-381. The active-site Nucleophile is Cys-408.

It belongs to the class I-like SAM-binding methyltransferase superfamily. RNA M5U methyltransferase family.

This is an uncharacterized protein from Streptococcus mutans serotype c (strain ATCC 700610 / UA159).